Here is a 541-residue protein sequence, read N- to C-terminus: MITTKEIIIASLNEALEKLEIKKPITLTEPKSYGDYSTNLALTLQKELGKPAIEIAKEIVNAIDLKKHKEIVKVEVANPGFINFWVSNSVLSDLVNSINSLEDHYGDMSKEGKGAVNIEFVSANPTGFLHIGHARNAAIGATLCNVLEKAGHRVVREYYVNDYGNQMNNLAASVFSRYQQIFNKDFPMPDDAYKGHDMTIFADAFFKKYGDKYRNVAYTEEVKKLFRDFGREIALENIKIDLGRFGVWFDLYTSETQQYEKDRVWPVIRRLKSTYEKDGATWLNTTKGGNDDKDRVIIKGNGESTYMCADIAYHEQKFVELHDPEKGKIIDIWGADHSGYVERIKFSFEDLGWRRDQIEILLFQLLRVVKNGKEIKMSKRLGTSLTLRELLDLVGKDAVRYFLIERSYNSKIDFDINKVQKSDETNPLFLIKYAHARCYQLLEKAQIKNPIASNLENDFAQKLTNELKEYPNLIDTMAKTYKVNLLPPYLLKLAGAFNSFYSNVRISGDPNEQSYLALVKATKIVLANAMKLMDLDIPNKM.

The 'HIGH' region motif lies at 123-133; it reads ANPTGFLHIGH.

It belongs to the class-I aminoacyl-tRNA synthetase family. As to quaternary structure, monomer.

The protein localises to the cytoplasm. The catalysed reaction is tRNA(Arg) + L-arginine + ATP = L-arginyl-tRNA(Arg) + AMP + diphosphate. The chain is Arginine--tRNA ligase from Metamycoplasma arthritidis (strain 158L3-1) (Mycoplasma arthritidis).